Here is a 1066-residue protein sequence, read N- to C-terminus: Beta-galactosidase (1066 aa).

Residues Asn110 and Asp209 each contribute to the substrate site. Asp209 serves as a coordination point for Na(+). Glu432, His434, and Glu477 together coordinate Mg(2+). Substrate is bound by residues Glu477 and 553–556; that span reads EYAH. Catalysis depends on Glu477, which acts as the Proton donor. The Nucleophile role is filled by Glu553. A Mg(2+)-binding site is contributed by Asn613. 2 residues coordinate Na(+): Phe617 and Asn620. Asn620 and Trp1041 together coordinate substrate.

This sequence belongs to the glycosyl hydrolase 2 family. Homotetramer. The cofactor is Mg(2+). Na(+) serves as cofactor.

It catalyses the reaction Hydrolysis of terminal non-reducing beta-D-galactose residues in beta-D-galactosides.. In Yersinia pseudotuberculosis serotype IB (strain PB1/+), this protein is Beta-galactosidase.